The following is a 172-amino-acid chain: NADH-ubiquinone oxidoreductase chain 6 (172 aa).

The next 5 membrane-spanning stretches (helical) occupy residues Met1 to Ser21, Ala24 to Val44, Leu53 to Leu73, Val86 to Leu106, and Gly140 to Val160.

It belongs to the complex I subunit 6 family. Core subunit of respiratory chain NADH dehydrogenase (Complex I) which is composed of 45 different subunits.

It is found in the mitochondrion inner membrane. The enzyme catalyses a ubiquinone + NADH + 5 H(+)(in) = a ubiquinol + NAD(+) + 4 H(+)(out). Functionally, core subunit of the mitochondrial membrane respiratory chain NADH dehydrogenase (Complex I) which catalyzes electron transfer from NADH through the respiratory chain, using ubiquinone as an electron acceptor. Essential for the catalytic activity and assembly of complex I. The sequence is that of NADH-ubiquinone oxidoreductase chain 6 (mt-nd6) from Danio rerio (Zebrafish).